Here is a 186-residue protein sequence, read N- to C-terminus: Putative adenylate kinase (186 aa).

Positions 10, 12, 13, 14, and 15 each coordinate ATP. Residues His30 to Ala53 are NMP. The interval Lys108–Glu118 is LID. Arg109 provides a ligand contact to ATP.

Belongs to the adenylate kinase family. AK6 subfamily. As to quaternary structure, interacts with uS11. Not a structural component of 40S pre-ribosomes, but transiently interacts with them by binding to uS11.

The enzyme catalyses AMP + ATP = 2 ADP. The catalysed reaction is ATP + H2O = ADP + phosphate + H(+). Broad-specificity nucleoside monophosphate (NMP) kinase that catalyzes the reversible transfer of the terminal phosphate group between nucleoside triphosphates and monophosphates. Also has ATPase activity. Involved in the late maturation steps of the 30S ribosomal particles, specifically 16S rRNA maturation. While NMP activity is not required for ribosome maturation, ATPase activity is. Associates transiently with small ribosomal subunit protein uS11. ATP hydrolysis breaks the interaction with uS11. May temporarily remove uS11 from the ribosome to enable a conformational change of the ribosomal RNA that is needed for the final maturation step of the small ribosomal subunit. The chain is Putative adenylate kinase from Methanosarcina acetivorans (strain ATCC 35395 / DSM 2834 / JCM 12185 / C2A).